A 326-amino-acid chain; its full sequence is Beta-ketoacyl-[acyl-carrier-protein] synthase III (326 aa).

Residues cysteine 120 and histidine 253 contribute to the active site. The segment at 254-258 (QANIR) is ACP-binding. Asparagine 283 is a catalytic residue.

Belongs to the thiolase-like superfamily. FabH family. As to quaternary structure, homodimer.

Its subcellular location is the cytoplasm. The catalysed reaction is malonyl-[ACP] + acetyl-CoA + H(+) = 3-oxobutanoyl-[ACP] + CO2 + CoA. The protein operates within lipid metabolism; fatty acid biosynthesis. Catalyzes the condensation reaction of fatty acid synthesis by the addition to an acyl acceptor of two carbons from malonyl-ACP. Catalyzes the first condensation reaction which initiates fatty acid synthesis and may therefore play a role in governing the total rate of fatty acid production. Possesses both acetoacetyl-ACP synthase and acetyl transacylase activities. Its substrate specificity determines the biosynthesis of branched-chain and/or straight-chain of fatty acids. In Ralstonia nicotianae (strain ATCC BAA-1114 / GMI1000) (Ralstonia solanacearum), this protein is Beta-ketoacyl-[acyl-carrier-protein] synthase III.